We begin with the raw amino-acid sequence, 346 residues long: MSVTPNPDQHVAQLIDANLDRAREGLRVIEDWCRFSLKNKDMVITLKNWRQQLGKEHYEIYKNARSSSSDQSAGLSHPAQKERILPQQILSANFARIQEALRVIEEFSRISHPKLSKISAQIRYEIYDLEVIILKISNLNMLDEKLKSCKLCLITRTHPELIKTVLLALKAGVTMIQYRCKETPDNQMIAEAKELASICKSYNSLFLINDRADIALAVDADGVHLGQKDMPIQTARKIIGHQKIIGLSTHSLEEIQNATSQGCNYIGIGPIFKTKSKQNDLSLGIDFFSKINLKTNLPWFAIGGINKDNIDKIKEVGIKRVAVINAIMGAEDPYLASKELLGKLKK.

Residues 1-125 (MSVTPNPDQH…SKISAQIRYE (125 aa)) form a unknown region. Residues 126–346 (IYDLEVIILK…SKELLGKLKK (221 aa)) are thiamine-phosphate synthase. 4-amino-2-methyl-5-(diphosphooxymethyl)pyrimidine is bound by residues 177 to 181 (QYRCK) and Asn209. Mg(2+)-binding residues include Asp210 and Asp229. Ser248 serves as a coordination point for 4-amino-2-methyl-5-(diphosphooxymethyl)pyrimidine. 274-276 (TKS) is a 2-[(2R,5Z)-2-carboxy-4-methylthiazol-5(2H)-ylidene]ethyl phosphate binding site. Lys277 contacts 4-amino-2-methyl-5-(diphosphooxymethyl)pyrimidine. 2-[(2R,5Z)-2-carboxy-4-methylthiazol-5(2H)-ylidene]ethyl phosphate is bound at residue Gly304.

This sequence belongs to the thiamine-phosphate synthase family. It depends on Mg(2+) as a cofactor.

It carries out the reaction 2-[(2R,5Z)-2-carboxy-4-methylthiazol-5(2H)-ylidene]ethyl phosphate + 4-amino-2-methyl-5-(diphosphooxymethyl)pyrimidine + 2 H(+) = thiamine phosphate + CO2 + diphosphate. The enzyme catalyses 2-(2-carboxy-4-methylthiazol-5-yl)ethyl phosphate + 4-amino-2-methyl-5-(diphosphooxymethyl)pyrimidine + 2 H(+) = thiamine phosphate + CO2 + diphosphate. It catalyses the reaction 4-methyl-5-(2-phosphooxyethyl)-thiazole + 4-amino-2-methyl-5-(diphosphooxymethyl)pyrimidine + H(+) = thiamine phosphate + diphosphate. It functions in the pathway cofactor biosynthesis; thiamine diphosphate biosynthesis; thiamine phosphate from 4-amino-2-methyl-5-diphosphomethylpyrimidine and 4-methyl-5-(2-phosphoethyl)-thiazole: step 1/1. Its function is as follows. Condenses 4-methyl-5-(beta-hydroxyethyl)thiazole monophosphate (THZ-P) and 2-methyl-4-amino-5-hydroxymethyl pyrimidine pyrophosphate (HMP-PP) to form thiamine monophosphate (TMP). The sequence is that of Thiamine-phosphate synthase from Prochlorococcus marinus (strain SARG / CCMP1375 / SS120).